A 683-amino-acid chain; its full sequence is Heat shock protein homolog ECU03_0520 (683 aa).

This sequence belongs to the heat shock protein 70 family.

It localises to the cytoplasm. This is Heat shock protein homolog ECU03_0520 from Encephalitozoon cuniculi (strain GB-M1) (Microsporidian parasite).